Consider the following 423-residue polypeptide: tRNA(Met) cytidine acetate ligase (423 aa).

ATP is bound by residues 7–20 (VVEYNPFHNGHLYH), Gly102, Asn165, and Arg190.

This sequence belongs to the TmcAL family.

The protein localises to the cytoplasm. It catalyses the reaction cytidine(34) in elongator tRNA(Met) + acetate + ATP = N(4)-acetylcytidine(34) in elongator tRNA(Met) + AMP + diphosphate. Its function is as follows. Catalyzes the formation of N(4)-acetylcytidine (ac(4)C) at the wobble position of elongator tRNA(Met), using acetate and ATP as substrates. First activates an acetate ion to form acetyladenylate (Ac-AMP) and then transfers the acetyl group to tRNA to form ac(4)C34. The sequence is that of tRNA(Met) cytidine acetate ligase from Thermosipho africanus (strain TCF52B).